The primary structure comprises 428 residues: Glutamate-1-semialdehyde 2,1-aminomutase (428 aa).

K267 is modified (N6-(pyridoxal phosphate)lysine).

Belongs to the class-III pyridoxal-phosphate-dependent aminotransferase family. HemL subfamily. As to quaternary structure, homodimer. Pyridoxal 5'-phosphate serves as cofactor.

It localises to the cytoplasm. The enzyme catalyses (S)-4-amino-5-oxopentanoate = 5-aminolevulinate. Its pathway is porphyrin-containing compound metabolism; protoporphyrin-IX biosynthesis; 5-aminolevulinate from L-glutamyl-tRNA(Glu): step 2/2. In Trichlorobacter lovleyi (strain ATCC BAA-1151 / DSM 17278 / SZ) (Geobacter lovleyi), this protein is Glutamate-1-semialdehyde 2,1-aminomutase.